A 416-amino-acid polypeptide reads, in one-letter code: Imidazolonepropionase (416 aa).

Residues His-78 and His-80 each contribute to the Fe(3+) site. 2 residues coordinate Zn(2+): His-78 and His-80. 4-imidazolone-5-propanoate is bound by residues Arg-87, Tyr-150, and His-183. Tyr-150 contacts N-formimidoyl-L-glutamate. His-248 lines the Fe(3+) pocket. Residue His-248 coordinates Zn(2+). Gln-251 is a binding site for 4-imidazolone-5-propanoate. Position 323 (Asp-323) interacts with Fe(3+). Asp-323 contributes to the Zn(2+) binding site. N-formimidoyl-L-glutamate contacts are provided by Asn-325 and Gly-327. A 4-imidazolone-5-propanoate-binding site is contributed by Thr-328.

Belongs to the metallo-dependent hydrolases superfamily. HutI family. Zn(2+) is required as a cofactor. The cofactor is Fe(3+).

The protein resides in the cytoplasm. The catalysed reaction is 4-imidazolone-5-propanoate + H2O = N-formimidoyl-L-glutamate. It participates in amino-acid degradation; L-histidine degradation into L-glutamate; N-formimidoyl-L-glutamate from L-histidine: step 3/3. In terms of biological role, catalyzes the hydrolytic cleavage of the carbon-nitrogen bond in imidazolone-5-propanoate to yield N-formimidoyl-L-glutamate. It is the third step in the universal histidine degradation pathway. This chain is Imidazolonepropionase, found in Vibrio campbellii (strain ATCC BAA-1116).